A 316-amino-acid chain; its full sequence is Galectin-8 (316 aa).

2 consecutive Galectin domains span residues Tyr-18–Arg-151 and Phe-186–Trp-316. A carbohydrate-binding residues include Arg-68, Asn-78, and Glu-88. Trp-248–Asn-254 serves as a coordination point for a beta-D-galactoside.

In terms of assembly, homodimer. Interacts with CALCOCO2/NDP52. Interacts with PDPN; the interaction is glycosylation-dependent; may participate in connection of the lymphatic endothelium to the surrounding extracellular matrix. In terms of tissue distribution, expressed in liver, kidney, cardiac muscle, lung, and brain.

It localises to the cytoplasmic vesicle. The protein resides in the cytoplasm. It is found in the cytosol. In terms of biological role, beta-galactoside-binding lectin that acts as a sensor of membrane damage caused by infection and restricts the proliferation of infecting pathogens by targeting them for autophagy. Detects membrane rupture by binding beta-galactoside ligands located on the lumenal side of the endosome membrane; these ligands becoming exposed to the cytoplasm following rupture. Restricts infection by initiating autophagy via interaction with CALCOCO2/NDP52. Required to restrict infection of bacterial invasion such as S.typhimurium. Also required to restrict infection of Picornaviridae viruses. Has a marked preference for 3'-O-sialylated and 3'-O-sulfated glycans. The chain is Galectin-8 (Lgals8) from Rattus norvegicus (Rat).